The sequence spans 143 residues: Flagellar assembly factor FliW (143 aa).

This sequence belongs to the FliW family. In terms of assembly, interacts with translational regulator CsrA and flagellin(s).

Its subcellular location is the cytoplasm. In terms of biological role, acts as an anti-CsrA protein, binds CsrA and prevents it from repressing translation of its target genes, one of which is flagellin. Binds to flagellin and participates in the assembly of the flagellum. The polypeptide is Flagellar assembly factor FliW (Clostridium botulinum (strain 657 / Type Ba4)).